A 494-amino-acid chain; its full sequence is Psoralen synthase (494 aa).

The helical transmembrane segment at 12-29 (YFFSLFLVTIFLYKWLTL) threads the bilayer. C436 contacts heme.

The protein belongs to the cytochrome P450 family.

The protein resides in the endoplasmic reticulum membrane. Its subcellular location is the microsome membrane. It carries out the reaction (7S)-marmesin + reduced [NADPH--hemoprotein reductase] + O2 = psoralen + acetone + oxidized [NADPH--hemoprotein reductase] + 2 H2O + H(+). Its activity is regulated as follows. Inhibited by columbianetin. Involved in linear furanocumarin (psoralen) biosynthesis. Converts marmesin to psoralen. This chain is Psoralen synthase (CYP71AJ1), found in Ammi majus (Bishop's weed).